The chain runs to 212 residues: 3-oxo-tetronate 4-phosphate decarboxylase (212 aa).

Residue E79 is the Proton acceptor of the active site. Zn(2+)-binding residues include E79, H98, and H100. The Proton donor role is filled by Y125. Position 165 (H165) interacts with Zn(2+).

Belongs to the aldolase class II family. AraD/FucA subfamily. Zn(2+) is required as a cofactor.

It catalyses the reaction 3-dehydro-4-O-phospho-D-erythronate + H(+) = dihydroxyacetone phosphate + CO2. The catalysed reaction is 3-dehydro-4-O-phospho-L-erythronate + H(+) = dihydroxyacetone phosphate + CO2. Its function is as follows. Catalyzes the decarboxylation of 3-oxo-tetronate 4-phosphate to dihydroxyacetone phosphate (DHAP) and CO(2). The chain is 3-oxo-tetronate 4-phosphate decarboxylase from Escherichia coli O6:H1 (strain CFT073 / ATCC 700928 / UPEC).